The chain runs to 287 residues: Protease HtpX (287 aa).

Helical transmembrane passes span 4 to 24 and 36 to 56; these read ILLFLATNLAVVLVLSVVLNI and LSGLLVMAAVFGFGGAFISLL. Histidine 143 lines the Zn(2+) pocket. Glutamate 144 is a catalytic residue. Histidine 147 contributes to the Zn(2+) binding site. 2 helical membrane-spanning segments follow: residues 158–178 and 192–212; these read LMQGVVNTFVIFLSRFIANIV and MVYFGVSMVLELVFGFLASFI. Glutamate 221 is a Zn(2+) binding site.

It belongs to the peptidase M48B family. Zn(2+) is required as a cofactor.

The protein localises to the cell inner membrane. The polypeptide is Protease HtpX (Vibrio cholerae serotype O1 (strain ATCC 39315 / El Tor Inaba N16961)).